The following is a 222-amino-acid chain: UPF0758 protein Mpe_A2695 (222 aa).

One can recognise an MPN domain in the interval 100-222 (VFDSPQAVKD…VVSFAERGLL (123 aa)). Positions 171, 173, and 184 each coordinate Zn(2+). The short motif at 171–184 (HNHPSGVAEPSRAD) is the JAMM motif element.

Belongs to the UPF0758 family.

The polypeptide is UPF0758 protein Mpe_A2695 (Methylibium petroleiphilum (strain ATCC BAA-1232 / LMG 22953 / PM1)).